Consider the following 382-residue polypeptide: 1-deoxy-D-xylulose 5-phosphate reductoisomerase (382 aa).

Positions 10, 11, 12, 13, 36, and 122 each coordinate NADPH. Lys123 is a 1-deoxy-D-xylulose 5-phosphate binding site. Glu124 contacts NADPH. Asp148 contributes to the Mn(2+) binding site. Positions 149, 150, 174, and 197 each coordinate 1-deoxy-D-xylulose 5-phosphate. Glu150 is a Mn(2+) binding site. Residue Gly203 coordinates NADPH. Ser210, Asn215, Lys216, and Glu219 together coordinate 1-deoxy-D-xylulose 5-phosphate. Glu219 contributes to the Mn(2+) binding site.

The protein belongs to the DXR family. The cofactor is Mg(2+). Mn(2+) serves as cofactor.

It carries out the reaction 2-C-methyl-D-erythritol 4-phosphate + NADP(+) = 1-deoxy-D-xylulose 5-phosphate + NADPH + H(+). Its pathway is isoprenoid biosynthesis; isopentenyl diphosphate biosynthesis via DXP pathway; isopentenyl diphosphate from 1-deoxy-D-xylulose 5-phosphate: step 1/6. Its function is as follows. Catalyzes the NADPH-dependent rearrangement and reduction of 1-deoxy-D-xylulose-5-phosphate (DXP) to 2-C-methyl-D-erythritol 4-phosphate (MEP). This chain is 1-deoxy-D-xylulose 5-phosphate reductoisomerase, found in Chlorobium phaeobacteroides (strain BS1).